A 624-amino-acid chain; its full sequence is Chromosomal replication initiator protein DnaA (624 aa).

The domain I, interacts with DnaA modulators stretch occupies residues 1 to 99; that stretch reads MADVPADLAA…SAGEPPSPPA (99 aa). A disordered region spans residues 88–284; the sequence is DDSAGEPPSP…APGPGEPHAR (197 aa). The interval 100-283 is domain II; it reads PPMHQSHQSQ…PAPGPGEPHA (184 aa). Residues 102–112 are compositionally biased toward low complexity; it reads MHQSHQSQQGH. Composition is skewed to basic and acidic residues over residues 118 to 141 and 176 to 206; these read QRDD…DGMP and GYQD…REQA. Residues 250–264 are compositionally biased toward gly residues; that stretch reads PRQGGHGPGRTGGSV. The interval 284–500 is domain III, AAA+ region; sequence RLNPKYLFDT…GALIRVTAFA (217 aa). 4 residues coordinate ATP: G328, G330, K331, and T332. Residues 501 to 624 form a domain IV, binds dsDNA region; it reads SLNRQPVDLG…TELTNRIKNG (124 aa).

This sequence belongs to the DnaA family. In terms of assembly, oligomerizes as a right-handed, spiral filament on DNA at oriC.

It localises to the cytoplasm. Plays an essential role in the initiation and regulation of chromosomal replication. ATP-DnaA binds to the origin of replication (oriC) to initiate formation of the DNA replication initiation complex once per cell cycle. Binds the DnaA box (a 9 base pair repeat at the origin) and separates the double-stranded (ds)DNA. Forms a right-handed helical filament on oriC DNA; dsDNA binds to the exterior of the filament while single-stranded (ss)DNA is stabiized in the filament's interior. The ATP-DnaA-oriC complex binds and stabilizes one strand of the AT-rich DNA unwinding element (DUE), permitting loading of DNA polymerase. After initiation quickly degrades to an ADP-DnaA complex that is not apt for DNA replication. Binds acidic phospholipids. In terms of biological role, the DnaA box consensus is 5'-(T/C)(T/C)(G/AC)TCCACA-3'. In Streptomyces anulatus (Streptomyces chrysomallus), this protein is Chromosomal replication initiator protein DnaA.